The primary structure comprises 522 residues: MKKSNLSQYKKNDKNKVEVTKILTRIEGFDDISHGGIPLGRTTLVSGTSGTGKTMFAIQFLYHGIVHFDDPAVFVTFEESPKDIIQNALSFGWDLQQLMDDGKLFILDASPDPEGQDIAGEFDLSALIERIQYAISKYQAKRVGIDSVTAIFQQYDAATVVRREIFRLTARLKQIGVTTVMTTERVDEYGPVARYGVEEFVSDNVVIVRNVLEGERRRRTLEILKLRGTSHMKGEYPFTITDDGINIFPLGAMRLTQRSSNARVSSGVQTLDEMCGGGFFKDSIILVTGATGTGKTLLVSKFLEDACKNGDRAILFAYEESRAQLSRNAYSWGIDFEEMEQKGLLKILCTYPESAGLEDHLQQIKSEIAEFKPSRISIDSLSALARGVSNNAFRQFVIGVTGFAKQEEITGFFTNTTDHFLGSHSITESHISTITDTILMLQYVEILGEMSRAINVFKMRGSWHDKGIREYSISQHGPEIKNAFHNFEGIISGTPTRVSLDEKRDLSRIVQDVKGLSDDDLL.

2 KaiC domains span residues 1-248 (MKKS…INIF) and 262-522 (ARVS…DDLL). Residues G50, T51, G52, K53, T54, S90, K225, L226, R227, T229, H231, T241, D242, T291, G292, T293, G294, K295, T296, and L297 each coordinate ATP. Residue T54 participates in Mg(2+) binding. T296 contacts Mg(2+). E319 contacts Mg(2+). W332 lines the ATP pocket. S432 carries the phosphoserine; by autocatalysis modification. T433 bears the Phosphothreonine; by autocatalysis mark. R452, K458, M459, R460, S462, H464, and K466 together coordinate ATP.

The protein belongs to the KaiC family. In terms of assembly, homohexamer; hexamerization is dependent on ATP-binding. The KaiABC complex composition changes during the circadian cycle to control KaiC phosphorylation. Complexes KaiC(6), KaiA(2-4):KaiC(6), KaiB(6):KaiC(6) and KaiC(6):KaiB(6):KaiA(12) are among the most important forms, many form cooperatively. KaiC interacts with SasA, activating its autokinase function and leading to RpaA activation. Mg(2+) is required as a cofactor. In terms of processing, phosphorylated on serine and threonine residues by autocatalysis. Has a 4 step phosphorylation cycle; the autokinase acts first on Thr-433, then Ser-432. When Ser-432 is modified KaiC switches to an autophosphatase mode, acting first on phospho-Thr-433 then phospho-Ser-432.

The enzyme catalyses L-seryl-[protein] + ATP = O-phospho-L-seryl-[protein] + ADP + H(+). It catalyses the reaction L-threonyl-[protein] + ATP = O-phospho-L-threonyl-[protein] + ADP + H(+). It carries out the reaction ATP + H2O = ADP + phosphate + H(+). Its activity is regulated as follows. The interaction with KaiA enhances its phosphorylation status, while the interaction with KaiB decreases it. Functionally, central component of the KaiABC oscillator complex, which constitutes the main circadian regulator in cyanobacteria. Complex composition changes during the circadian cycle to control KaiC phosphorylation. KaiA stimulates KaiC autophosphorylation, while KaiB sequesters KaiA, leading to KaiC autodephosphorylation. Clock output pathways impact the RpaA transcriptional regulator. KaiC enhances the autophosphorylation activity of SasA, which then transfers its phosphate group to RpaA to activate it. KaiB and KaiC together enhance the phospho-RpaA dephosphatase activity of CikA. Has a weak, temperature-independent ATPase activity; ATPase activity defines the circadian period. The phosphorylation state of KaiC modulates its ATPase activity and effects KaiB binding. This is Circadian clock oscillator protein KaiC from Acaryochloris marina (strain MBIC 11017).